The following is a 223-amino-acid chain: 3,4-dihydroxy-2-butanone 4-phosphate synthase (223 aa).

D-ribulose 5-phosphate is bound by residues 47–48, aspartate 52, 160–164, and glutamate 184; these read RE and RRGHT. Glutamate 48 contacts Mg(2+). Histidine 163 contributes to the Mg(2+) binding site.

It belongs to the DHBP synthase family. Homodimer. It depends on Mg(2+) as a cofactor. The cofactor is Mn(2+).

The enzyme catalyses D-ribulose 5-phosphate = (2S)-2-hydroxy-3-oxobutyl phosphate + formate + H(+). It functions in the pathway cofactor biosynthesis; riboflavin biosynthesis; 2-hydroxy-3-oxobutyl phosphate from D-ribulose 5-phosphate: step 1/1. In terms of biological role, catalyzes the conversion of D-ribulose 5-phosphate to formate and 3,4-dihydroxy-2-butanone 4-phosphate. This Cupriavidus pinatubonensis (strain JMP 134 / LMG 1197) (Cupriavidus necator (strain JMP 134)) protein is 3,4-dihydroxy-2-butanone 4-phosphate synthase.